A 194-amino-acid polypeptide reads, in one-letter code: Dephospho-CoA kinase (194 aa).

Positions 4-194 (VIGLTGSIGM…VKEILQKLGA (191 aa)) constitute a DPCK domain. 12-17 (GMGKTT) is an ATP binding site.

Belongs to the CoaE family.

It is found in the cytoplasm. The catalysed reaction is 3'-dephospho-CoA + ATP = ADP + CoA + H(+). Its pathway is cofactor biosynthesis; coenzyme A biosynthesis; CoA from (R)-pantothenate: step 5/5. Functionally, catalyzes the phosphorylation of the 3'-hydroxyl group of dephosphocoenzyme A to form coenzyme A. The polypeptide is Dephospho-CoA kinase (Agrobacterium fabrum (strain C58 / ATCC 33970) (Agrobacterium tumefaciens (strain C58))).